The following is a 579-amino-acid chain: MAVAAALLRRRALYSALASPSWLHDTSSCYICSISGTHSLVNHPNLRLQRGYHNSGKFDLTDLTHPHIWYPNAREKKRNVFLHVGPTNSGKTHNALKRLEASSSGVYCGPLRLLAREVAQRLNKANVPCNLITGQEREEIEGAKHSSVTVEMADMTTEYQCAVIDEIQMVGCRSRGFSFTRALLGLCSDELHVCGDPAVVPLIQRILEPTGDVVTVQYYERLSPLVPLKTTLGSFSNIKAGDCVVTFSRRSIYMLKRRIEMGGKHLCSVVYGSLPPETRTKQATMFNDQDSNLNVLVASDAIGMGLNLNISRIIFSTLEKFDGICNRELTVAEIKQIAGRAGRYGSKFPVGEVTCLNSDHLPLLHSALKSPSPIIERAGLFPTFDVLSLYSRLHGTDFFQPILERFLDKAKLSPDYFIADCEDMLKVAAIVDELPLGLYDKYLFCLSPVDIRDDISTKGLIQFAENYAKKGIVRLKEIFTPGTLQVPKSHNQLKELESIHKVLELYVWLSFRLEDSYPDRELAASQKSICSMLIEEYLERSGWQQNGRKDFLQKPKRLHQEYDASQLRKYFQEIDVRSK.

Residues Met1–Asp59 constitute a mitochondrion transit peptide. Residues Asn72–Val213 form the Helicase ATP-binding domain. Gly85–Thr92 contributes to the ATP binding site. The Helicase C-terminal domain occupies Val214–Ser388. An N-linked (GlcNAc...) asparagine glycan is attached at Asn309.

Belongs to the helicase family. In terms of assembly, homodimer; in free form. Component of the mitochondrial degradosome (mtEXO) complex which is a heteropentamer containing 2 copies of SUPV3L1 and 3 copies of PNPT1. Mg(2+) serves as cofactor. The cofactor is Mn(2+).

The protein localises to the nucleus. Its subcellular location is the mitochondrion matrix. It localises to the mitochondrion nucleoid. It catalyses the reaction ATP + H2O = ADP + phosphate + H(+). Functionally, major helicase player in mitochondrial RNA metabolism. Component of the mitochondrial degradosome (mtEXO) complex, that degrades 3' overhang double-stranded RNA with a 3'-to-5' directionality in an ATP-dependent manner. ATPase and ATP-dependent multisubstrate helicase, able to unwind double-stranded (ds) DNA and RNA, and RNA/DNA heteroduplexes in the 5'-to-3' direction. Plays a role in the RNA surveillance system in mitochondria; regulates the stability of mature mRNAs, the removal of aberrantly formed mRNAs and the rapid degradation of non coding processing intermediates. Confers salinity and drought stress tolerances by maintaining both photosynthesis and antioxidant machinery, probably via an increase in plant hormones levels such as gibberellic acid (GA(3)), the cytokinin zeatin (Z) and indole-3-acetic acid (IAA). In Oryza sativa subsp. japonica (Rice), this protein is ATP-dependent RNA helicase SUV3, mitochondrial.